The primary structure comprises 156 residues: MPRKGPVAKRDVLPDPMYNSKLVTRLINKMMVDGKKGKSQTILYNAFDIVNERTGKEPMEVFEQALKNIMPVLEVRARRVGGANYQVPVEVRPERRTTLGLRWLVNYARLRGEKTMEERLANEILDAANNAGASVKKREDTHKMAEANKAFAHYRW.

This sequence belongs to the universal ribosomal protein uS7 family. As to quaternary structure, part of the 30S ribosomal subunit. Contacts proteins S9 and S11.

Its function is as follows. One of the primary rRNA binding proteins, it binds directly to 16S rRNA where it nucleates assembly of the head domain of the 30S subunit. Is located at the subunit interface close to the decoding center, probably blocks exit of the E-site tRNA. In Bacillus cereus (strain B4264), this protein is Small ribosomal subunit protein uS7.